Consider the following 103-residue polypeptide: Small ribosomal subunit protein uS10 (103 aa).

It belongs to the universal ribosomal protein uS10 family. As to quaternary structure, part of the 30S ribosomal subunit.

Its function is as follows. Involved in the binding of tRNA to the ribosomes. The polypeptide is Small ribosomal subunit protein uS10 (Campylobacter lari (strain RM2100 / D67 / ATCC BAA-1060)).